Consider the following 172-residue polypeptide: Lipoprotein signal peptidase (172 aa).

Helical transmembrane passes span 12-32 (TSAA…VILF), 43-63 (VFAY…LVYN), 77-97 (WQRW…CYLL), and 102-122 (GQKM…GNVI). Residues Asp132 and Asp150 contribute to the active site. The helical transmembrane segment at 142–162 (HWPAFNLADSAITVGAVLLVL) threads the bilayer.

Belongs to the peptidase A8 family.

Its subcellular location is the cell inner membrane. It carries out the reaction Release of signal peptides from bacterial membrane prolipoproteins. Hydrolyzes -Xaa-Yaa-Zaa-|-(S,diacylglyceryl)Cys-, in which Xaa is hydrophobic (preferably Leu), and Yaa (Ala or Ser) and Zaa (Gly or Ala) have small, neutral side chains.. Its pathway is protein modification; lipoprotein biosynthesis (signal peptide cleavage). This protein specifically catalyzes the removal of signal peptides from prolipoproteins. The protein is Lipoprotein signal peptidase of Paraburkholderia phytofirmans (strain DSM 17436 / LMG 22146 / PsJN) (Burkholderia phytofirmans).